The primary structure comprises 373 residues: ATP phosphoribosyltransferase regulatory subunit (373 aa).

This sequence belongs to the class-II aminoacyl-tRNA synthetase family. HisZ subfamily. As to quaternary structure, heteromultimer composed of HisG and HisZ subunits.

It is found in the cytoplasm. Its pathway is amino-acid biosynthesis; L-histidine biosynthesis; L-histidine from 5-phospho-alpha-D-ribose 1-diphosphate: step 1/9. In terms of biological role, required for the first step of histidine biosynthesis. May allow the feedback regulation of ATP phosphoribosyltransferase activity by histidine. In Chelativorans sp. (strain BNC1), this protein is ATP phosphoribosyltransferase regulatory subunit.